Here is a 130-residue protein sequence, read N- to C-terminus: Small ribosomal subunit protein uS9 (130 aa).

This sequence belongs to the universal ribosomal protein uS9 family.

This Caldicellulosiruptor bescii (strain ATCC BAA-1888 / DSM 6725 / KCTC 15123 / Z-1320) (Anaerocellum thermophilum) protein is Small ribosomal subunit protein uS9.